A 237-amino-acid polypeptide reads, in one-letter code: V-type proton ATPase subunit E (237 aa).

This sequence belongs to the V-ATPase E subunit family. In terms of assembly, V-ATPase is a heteromultimeric enzyme composed of a peripheral catalytic V1 complex (components A to H) attached to an integral membrane V0 proton pore complex (components: a, c, c', c'' and d).

Functionally, subunit of the peripheral V1 complex of vacuolar ATPase essential for assembly or catalytic function. V-ATPase is responsible for acidifying a variety of intracellular compartments in eukaryotic cells. This is V-type proton ATPase subunit E (VATE) from Gossypium hirsutum (Upland cotton).